A 362-amino-acid polypeptide reads, in one-letter code: Epoxide hydrolase 4 (362 aa).

The chain crosses the membrane as a helical; Signal-anchor for type II membrane protein span at residues 17–37 (SLLFWSLVYCYCGLCASIHLL). The AB hydrolase-1 domain occupies 94 to 211 (PLMLLLHGFP…EYILRHPAQL (118 aa)). Catalysis depends on Asp-169, which acts as the Nucleophile. Tyr-281 acts as the Proton donor in catalysis. His-336 acts as the Proton acceptor in catalysis.

Belongs to the AB hydrolase superfamily. Epoxide hydrolase family.

The protein localises to the membrane. This chain is Epoxide hydrolase 4 (EPHX4), found in Homo sapiens (Human).